A 555-amino-acid chain; its full sequence is B3 domain-containing protein REM10 (555 aa).

4 consecutive DNA-binding regions (TF-B3) follow at residues 11-103 (NPQF…LGPS), 150-247 (CFVA…FPMT), 276-372 (SFVA…LPLN), and 460-554 (SQNR…FCSK).

The protein resides in the nucleus. This is B3 domain-containing protein REM10 (REM10) from Arabidopsis thaliana (Mouse-ear cress).